Reading from the N-terminus, the 118-residue chain is Large ribosomal subunit protein bL20 (118 aa).

This sequence belongs to the bacterial ribosomal protein bL20 family.

Functionally, binds directly to 23S ribosomal RNA and is necessary for the in vitro assembly process of the 50S ribosomal subunit. It is not involved in the protein synthesizing functions of that subunit. This Tolumonas auensis (strain DSM 9187 / NBRC 110442 / TA 4) protein is Large ribosomal subunit protein bL20.